A 369-amino-acid chain; its full sequence is 3,7-dimethylxanthine N-methyltransferase TCS1 (369 aa).

Tyrosine 24 contributes to the S-adenosyl-L-homocysteine binding site. Threonine 31 is a binding site for caffeine. S-adenosyl-L-homocysteine contacts are provided by cysteine 66, asparagine 71, aspartate 103, leucine 104, serine 138, and phenylalanine 139. Caffeine is bound by residues tyrosine 156, histidine 159, and tryptophan 160. Asparagine 177 is a Mg(2+) binding site. Arginine 225 lines the caffeine pocket. Positions 263, 265, and 266 each coordinate Mg(2+). Position 321 (phenylalanine 321) interacts with caffeine.

It belongs to the methyltransferase superfamily. Type-7 methyltransferase family. It depends on Mg(2+) as a cofactor.

The enzyme catalyses 1,7-dimethylxanthine + S-adenosyl-L-methionine = caffeine + S-adenosyl-L-homocysteine + H(+). The catalysed reaction is theobromine + S-adenosyl-L-methionine = caffeine + S-adenosyl-L-homocysteine + H(+). It catalyses the reaction 7-methylxanthine + S-adenosyl-L-methionine = theobromine + S-adenosyl-L-homocysteine + H(+). It functions in the pathway alkaloid biosynthesis. Involved in the biosynthesis of caffeine in cv. Puer. Involved in the biosynthesis of theacrine in cv. Kucha, a caffeine-like xanthine alkaloid with diverse beneficial biological activities including anti-depressive, sedative, and hypnotic activities, improving learning and memory, increasing exercise activity, and preventing nonalcoholic fatty liver disease. Catalyzes the conversion of 7-methylxanthine (7mX) to theobromine and of theobromine to caffeine. Has 3-N- and 1-N-methylation activity. This chain is 3,7-dimethylxanthine N-methyltransferase TCS1, found in Camellia sinensis var. assamica (Assam tea).